Here is a 51-residue protein sequence, read N- to C-terminus: MRDKIKLVSSAGTGHFYTTTKNKRTMPEKMEIKKFDPVVRKHVLYKEAKIK.

Belongs to the bacterial ribosomal protein bL33 family.

This Methylococcus capsulatus (strain ATCC 33009 / NCIMB 11132 / Bath) protein is Large ribosomal subunit protein bL33.